The primary structure comprises 387 residues: 1,3-propanediol dehydrogenase (387 aa).

This sequence belongs to the iron-containing alcohol dehydrogenase family. In terms of assembly, homooctamer. Fe cation is required as a cofactor.

The enzyme catalyses propane-1,3-diol + NAD(+) = 3-hydroxypropanal + NADH + H(+). Its activity is regulated as follows. Inhibited by the metal chelator 1,10-phenanthroline. In terms of biological role, catalyzes the reduction of 3-hydroxypropanal. Is considerably less active with glyceraldehyde, propionaldehyde, acetaldehyde, and butyraldehyde. Also catalyzes the oxidation of various primary, secondary, and tertiary alcohols. Is most active with substrates containing two primary alcohol groups separated by one or two carbon atoms. 1,3-propanediol is the preferred substrate. This Citrobacter freundii protein is 1,3-propanediol dehydrogenase.